The primary structure comprises 467 residues: MASVAAARAVPVGSGLRGLQRTLPLVVILGATGTGKSTLALQLGQRLGGEIVSADSMQVYEGLDIITNKVSAQEQRICRHHMISFVDPLVTNYTVVDFRNRATALIEDIFARDKIPIVVGGTNYYIESLLWKVLVNTKPQEMGTEKVIDRKVELEKEDGLVLHKRLSQVDPEMAAKLHPHDKRKVARSLQVFEETGISHSEFLHRQHTEEGGGPLGGPLKFSNPCILWLHADQAVLDERLDKRVDDMLAAGLLEELRDFHRRYNQKNVSENSQDYQHGIFQSIGFKEFHEYLITEGKCTLETSNQLLKKGIEALKQVTKRYARKQNRWVKNRFLSRPGPIVPPVYGLEVSDVSKWEESVLEPALEIVQSFIQGHKPTATPIKMPYNEAENKRSYHLCDLCDRIIIGDREWAAHIKSKSHLNQLKKRRRLDSDAVNTIESQSVSPDHNKEPKEKGSPGQNDQELKCSV.

Residues 1–47 (MASVAAARAVPVGSGLRGLQRTLPLVVILGATGTGKSTLALQLGQRL) constitute a mitochondrion transit peptide. 32–37 (TGTGKS) contributes to the dimethylallyl diphosphate binding site. Interaction with substrate tRNA stretches follow at residues 55-58 (DSMQ) and 183-187 (RKVAR). A core aggregation region region spans residues 221–230 (FSNPCILWLH). The segment at 233–255 (QAVLDERLDKRVDDMLAAGLLEE) is interaction with isopentenylpyrophosphate transferase. Interaction with substrate tRNA stretches follow at residues 281–283 (QSI) and 313–331 (ALKQ…WVKN). The Matrin-type zinc finger occupies 395–425 (HLCDLCDRIIIGDREWAAHIKSKSHLNQLKK). Residues 429–467 (LDSDAVNTIESQSVSPDHNKEPKEKGSPGQNDQELKCSV) are disordered. Residues 433–444 (AVNTIESQSVSP) are compositionally biased toward polar residues. S443 carries the post-translational modification Phosphoserine. Basic and acidic residues predominate over residues 445–454 (DHNKEPKEKG). At S455 the chain carries Phosphoserine.

It belongs to the IPP transferase family.

The protein localises to the mitochondrion. It is found in the cytoplasm. It carries out the reaction adenosine(37) in tRNA + dimethylallyl diphosphate = N(6)-dimethylallyladenosine(37) in tRNA + diphosphate. In terms of biological role, catalyzes the transfer of a dimethylallyl group onto the adenine at position 37 of both cytosolic and mitochondrial tRNAs, leading to the formation of N6-(dimethylallyl)adenosine (i6A37). Mediates modification of a limited subset of tRNAs: tRNA(Ser)(AGA), tRNA(Ser)(CGA), tRNA(Ser)(UGA), as well as partial modification of the selenocysteine tRNA(Ser)(UCA). TRIT1 is therefore required for selenoprotein expression. This is tRNA dimethylallyltransferase (TRIT1) from Homo sapiens (Human).